A 176-amino-acid polypeptide reads, in one-letter code: Large ribosomal subunit protein uL6 (176 aa).

Over residues 156–170 (YKGKGVRYADEQVRR) the composition is skewed to basic and acidic residues. The tract at residues 156–176 (YKGKGVRYADEQVRRKEAKKK) is disordered.

It belongs to the universal ribosomal protein uL6 family. In terms of assembly, part of the 50S ribosomal subunit.

Functionally, this protein binds to the 23S rRNA, and is important in its secondary structure. It is located near the subunit interface in the base of the L7/L12 stalk, and near the tRNA binding site of the peptidyltransferase center. The protein is Large ribosomal subunit protein uL6 of Shewanella woodyi (strain ATCC 51908 / MS32).